The sequence spans 112 residues: Nitrogenase-stabilizing/protective protein NifW (112 aa).

Belongs to the NifW family. Homotrimer; associates with NifD.

May protect the nitrogenase Fe-Mo protein from oxidative damage. This chain is Nitrogenase-stabilizing/protective protein NifW, found in Rhodopseudomonas palustris (strain BisA53).